We begin with the raw amino-acid sequence, 104 residues long: Large ribosomal subunit protein bL21 (104 aa).

This sequence belongs to the bacterial ribosomal protein bL21 family. Part of the 50S ribosomal subunit. Contacts protein L20.

Functionally, this protein binds to 23S rRNA in the presence of protein L20. The sequence is that of Large ribosomal subunit protein bL21 from Desulfosudis oleivorans (strain DSM 6200 / JCM 39069 / Hxd3) (Desulfococcus oleovorans).